The primary structure comprises 497 residues: MRACPFLLLLLLPLLLSLGRIAAVRDAAGAGPERRQDDSVSQVQKLREEPSKVRDLQVKFIVRTTPDLDDADCYITAGQDHLLDDCNFNVSAKTFFVIHGWTMGGMYERWLDTLVSALQEREKEANVVVVNWLALAQQLYTIAVNNTRVVGKELAGLLDWLEEKKDFQLKNVHLIGYSLGAHIAGYTGNYARGIIGRITGLDPAGPMFEGADPSRRLSPDDADFVDVLHTYTRETLGISIGIQMPVGHIDIYPNGGDIQPGCGLTDILGTLALGEIGDLVICEHERSVHLFVDSLVNKDKQSFAFQCTDSGRFKKGICLSCRKNRCNSIGYNIKKMRNKRNSKMYLKTRAGMPFKVFHYQLKIHVFSYKSLGETEPSFSVTFYGTSGDSEPLPLEVSDQIGLNYTNTFLVYTEEDVGDILRIKLTWESTTQSWYNFWSQMKNYWSKPDPSSKELQIRRIRVKSGETQKKAMLAVEFWELKSTCLKMVKVEKHCSRPL.

The N-terminal stretch at 1–23 is a signal peptide; the sequence is MRACPFLLLLLLPLLLSLGRIAA. Cys-73 and Cys-86 form a disulfide bridge. Asn-89 and Asn-145 each carry an N-linked (GlcNAc...) asparagine glycan. Ser-178 functions as the Nucleophile in the catalytic mechanism. Asp-202 functions as the Charge relay system in the catalytic mechanism. Cys-262 and Cys-282 form a disulfide bridge. Residue His-284 is the Charge relay system of the active site. 2 cysteine pairs are disulfide-bonded: Cys-307–Cys-326 and Cys-318–Cys-321. Residue 335–347 coordinates heparin; the sequence is KMRNKRNSKMYLK. The 136-residue stretch at 357–492 folds into the PLAT domain; it reads FHYQLKIHVF…CLKMVKVEKH (136 aa). The N-linked (GlcNAc...) asparagine glycan is linked to Asn-403.

The protein belongs to the AB hydrolase superfamily. Lipase family. In terms of assembly, head to tail homodimer. In terms of tissue distribution, expressed by the venom gland.

It is found in the secreted. It carries out the reaction a triacylglycerol + H2O = a diacylglycerol + a fatty acid + H(+). With respect to regulation, inhibited by serum. Has phospholipase and triglyceride lipase activities. In Crotalus adamanteus (Eastern diamondback rattlesnake), this protein is Putative endothelial lipase.